Reading from the N-terminus, the 227-residue chain is Lipoprotein-releasing system ATP-binding protein LolD (227 aa).

Residues 7–227 form the ABC transporter domain; it reads LKLTGVERHY…TISDGKVVEF (221 aa). 43–50 contributes to the ATP binding site; the sequence is APSGTGKS.

It belongs to the ABC transporter superfamily. Lipoprotein translocase (TC 3.A.1.125) family. The complex is composed of two ATP-binding proteins (LolD) and two transmembrane proteins (LolC and LolE).

Its subcellular location is the cell inner membrane. Functionally, part of the ABC transporter complex LolCDE involved in the translocation of mature outer membrane-directed lipoproteins, from the inner membrane to the periplasmic chaperone, LolA. Responsible for the formation of the LolA-lipoprotein complex in an ATP-dependent manner. This is Lipoprotein-releasing system ATP-binding protein LolD from Rhizobium etli (strain ATCC 51251 / DSM 11541 / JCM 21823 / NBRC 15573 / CFN 42).